A 524-amino-acid chain; its full sequence is Probable cytochrome P450 12c1, mitochondrial (524 aa).

Cys470 is a binding site for heme.

The protein belongs to the cytochrome P450 family. Requires heme as cofactor.

The protein localises to the mitochondrion membrane. The protein is Probable cytochrome P450 12c1, mitochondrial (Cyp12c1) of Drosophila melanogaster (Fruit fly).